Here is a 245-residue protein sequence, read N- to C-terminus: 1-(5-phosphoribosyl)-5-[(5-phosphoribosylamino)methylideneamino] imidazole-4-carboxamide isomerase (245 aa).

Asp-7 (proton acceptor) is an active-site residue. The active-site Proton donor is the Asp-129.

This sequence belongs to the HisA/HisF family.

It is found in the cytoplasm. The catalysed reaction is 1-(5-phospho-beta-D-ribosyl)-5-[(5-phospho-beta-D-ribosylamino)methylideneamino]imidazole-4-carboxamide = 5-[(5-phospho-1-deoxy-D-ribulos-1-ylimino)methylamino]-1-(5-phospho-beta-D-ribosyl)imidazole-4-carboxamide. It functions in the pathway amino-acid biosynthesis; L-histidine biosynthesis; L-histidine from 5-phospho-alpha-D-ribose 1-diphosphate: step 4/9. The protein is 1-(5-phosphoribosyl)-5-[(5-phosphoribosylamino)methylideneamino] imidazole-4-carboxamide isomerase of Escherichia fergusonii (strain ATCC 35469 / DSM 13698 / CCUG 18766 / IAM 14443 / JCM 21226 / LMG 7866 / NBRC 102419 / NCTC 12128 / CDC 0568-73).